The following is a 378-amino-acid chain: Quinolinate synthase (378 aa).

Residues H59 and S80 each coordinate iminosuccinate. C125 serves as a coordination point for [4Fe-4S] cluster. Residues 151 to 153 (YAN) and S168 each bind iminosuccinate. Residue C212 coordinates [4Fe-4S] cluster. Residues 238 to 240 (HPE) and T255 contribute to the iminosuccinate site. C309 is a [4Fe-4S] cluster binding site.

Belongs to the quinolinate synthase family. Type 1 subfamily. [4Fe-4S] cluster is required as a cofactor.

The protein localises to the cytoplasm. It carries out the reaction iminosuccinate + dihydroxyacetone phosphate = quinolinate + phosphate + 2 H2O + H(+). It participates in cofactor biosynthesis; NAD(+) biosynthesis; quinolinate from iminoaspartate: step 1/1. Its function is as follows. Catalyzes the condensation of iminoaspartate with dihydroxyacetone phosphate to form quinolinate. This chain is Quinolinate synthase, found in Burkholderia lata (strain ATCC 17760 / DSM 23089 / LMG 22485 / NCIMB 9086 / R18194 / 383).